The primary structure comprises 209 residues: Large ribosomal subunit protein uL3 (209 aa).

The tract at residues Gly-118–Asn-152 is disordered.

It belongs to the universal ribosomal protein uL3 family. In terms of assembly, part of the 50S ribosomal subunit. Forms a cluster with proteins L14 and L19.

Its function is as follows. One of the primary rRNA binding proteins, it binds directly near the 3'-end of the 23S rRNA, where it nucleates assembly of the 50S subunit. In Bacillus licheniformis (strain ATCC 14580 / DSM 13 / JCM 2505 / CCUG 7422 / NBRC 12200 / NCIMB 9375 / NCTC 10341 / NRRL NRS-1264 / Gibson 46), this protein is Large ribosomal subunit protein uL3.